The following is a 521-amino-acid chain: Runt-related transcription factor 2 (521 aa).

Disordered stretches follow at residues Phe18–Gln59 and Asp222–Ser340. Low complexity-rich tracts occupy residues Pro21 to Ser33 and Ala47 to Gln59. The 129-residue stretch at Thr101–Arg229 folds into the Runt domain. Lys238 participates in a covalent cross-link: Glycyl lysine isopeptide (Lys-Gly) (interchain with G-Cter in SUMO2). The interval Phe242–Arg258 is required for interaction with FOXO1. At Arg267 the chain carries Asymmetric dimethylarginine. The segment covering Arg267–Gly326 has biased composition (polar residues). The tract at residues Pro336 to Thr439 is interaction with KAT6A. Position 340 is a phosphoserine (Ser340). The tract at residues Arg374 to Arg468 is interaction with KAT6B. Ser451 bears the Phosphoserine; by CDK1 mark. The tract at residues Pro460 to Tyr521 is disordered. Composition is skewed to polar residues over residues Cys473–Asp492 and Ser499–Gly511. Residues Arg512 to Tyr521 are compositionally biased toward basic and acidic residues.

In terms of assembly, heterodimer of an alpha and a beta subunit. The alpha subunit binds DNA as a monomer and through the Runt domain. DNA-binding is increased by heterodimerization. Interacts with XRCC6 (Ku70) and XRCC5 (Ku80). Interacts with HIVEP3. Interacts with IFI204. Interaction with SATB2; the interaction results in enhanced DNA binding and transactivation by these transcription factors. Binds to HIPK3. Interacts with FOXO1 (via a C-terminal region); the interaction inhibits RUNX2 transcriptional activity towards BGLAP. This interaction is prevented on insulin or IGF1 stimulation as FOXO1 is exported from the nucleus. Interacts with CCNB1, KAT6A and KAT6B. Interacts with FOXP3. Interacts with TMEM119. Interacts with OLFM2. Interacts with IPO7; the interaction inhibits RUNX2 nuclear translocation in osteoblasts. Interacts with DDX5. Post-translationally, phosphorylated; probably by MAP kinases (MAPK). Phosphorylation by HIPK3 is required for the SPEN/MINT and FGF2 transactivation during osteoblastic differentiation. Phosphorylation at Ser-451 by CDK1 promotes endothelial cell proliferation required for tumor angiogenesis probably by facilitating cell cycle progression. Isoform 3 is phosphorylated on Ser-340. Specifically expressed in osteoblasts.

Its subcellular location is the nucleus. It localises to the cytoplasm. Transcription factor involved in osteoblastic differentiation and skeletal morphogenesis. Essential for the maturation of osteoblasts and both intramembranous and endochondral ossification. CBF binds to the core site, 5'-PYGPYGGT-3', of a number of enhancers and promoters, including murine leukemia virus, polyomavirus enhancer, T-cell receptor enhancers, osteocalcin, osteopontin, bone sialoprotein, alpha 1(I) collagen, LCK, IL-3 and GM-CSF promoters. In osteoblasts, supports transcription activation: synergizes with SPEN/MINT to enhance FGFR2-mediated activation of the osteocalcin FGF-responsive element (OCFRE). Inhibits KAT6B-dependent transcriptional activation. In Homo sapiens (Human), this protein is Runt-related transcription factor 2 (RUNX2).